The primary structure comprises 161 residues: MKLGHREQQFYLWYFIVHIPITIFIDSSVVIPAKWQLGIAQKVVSDHIAKQHDFLLSEKPEWLYWFVVLELVLQLPLFVYFVNKFWNSSELQVNTNSRLKKWLRIYGWNASLTTLICIVVIFKRGYIPYDVLKTSLSMTQKCQLASVYLPTFLIPLRLCFV.

The Cytoplasmic segment spans residues 1–10 (MKLGHREQQF). In terms of domain architecture, EXPERA spans 7–159 (EQQFYLWYFI…PTFLIPLRLC (153 aa)). Residues 11–31 (YLWYFIVHIPITIFIDSSVVI) traverse the membrane as a helical segment. Topologically, residues 32 to 61 (PAKWQLGIAQKVVSDHIAKQHDFLLSEKPE) are lumenal. Residues 62–82 (WLYWFVVLELVLQLPLFVYFV) traverse the membrane as a helical segment. At 83-101 (NKFWNSSELQVNTNSRLKK) the chain is on the cytoplasmic side. The helical transmembrane segment at 102–122 (WLRIYGWNASLTTLICIVVIF) threads the bilayer. The Lumenal portion of the chain corresponds to 123–141 (KRGYIPYDVLKTSLSMTQK). Residues 142–160 (CQLASVYLPTFLIPLRLCF) form a helical membrane-spanning segment. A topological domain (cytoplasmic) is located at residue valine 161.

The protein belongs to the TMEM97/sigma-2 receptor family.

It is found in the endoplasmic reticulum membrane. Its function is as follows. Part of an import route for newly synthesized mitochondrial proteins termed the ER-SURF pathway (ER surface-mediated protein targeting), which retrieves mitochondrial precursor proteins from the ER surface and reroutes them to mitochondria for efficient mitochondrial import. Acts as a quality control factor in the ER, promoting the proteolytic degradation of nonproductive and extramitochondrial precursor proteins in the ER membrane thus removing them from the ER surface. The polypeptide is Efficient mitochondria targeting-associated protein 19 (Saccharomyces cerevisiae (strain ATCC 204508 / S288c) (Baker's yeast)).